The following is a 502-amino-acid chain: Protein nucleotidyltransferase YdiU (502 aa).

Residues Gly98, Gly100, Arg101, Lys121, Asp133, Gly134, Arg184, and Arg191 each coordinate ATP. The active-site Proton acceptor is the Asp260. Residues Asn261 and Asp270 each contribute to the Mg(2+) site. An ATP-binding site is contributed by Asp270.

This sequence belongs to the SELO family. Mg(2+) is required as a cofactor. The cofactor is Mn(2+).

The enzyme catalyses L-seryl-[protein] + ATP = 3-O-(5'-adenylyl)-L-seryl-[protein] + diphosphate. It catalyses the reaction L-threonyl-[protein] + ATP = 3-O-(5'-adenylyl)-L-threonyl-[protein] + diphosphate. The catalysed reaction is L-tyrosyl-[protein] + ATP = O-(5'-adenylyl)-L-tyrosyl-[protein] + diphosphate. It carries out the reaction L-histidyl-[protein] + UTP = N(tele)-(5'-uridylyl)-L-histidyl-[protein] + diphosphate. The enzyme catalyses L-seryl-[protein] + UTP = O-(5'-uridylyl)-L-seryl-[protein] + diphosphate. It catalyses the reaction L-tyrosyl-[protein] + UTP = O-(5'-uridylyl)-L-tyrosyl-[protein] + diphosphate. In terms of biological role, nucleotidyltransferase involved in the post-translational modification of proteins. It can catalyze the addition of adenosine monophosphate (AMP) or uridine monophosphate (UMP) to a protein, resulting in modifications known as AMPylation and UMPylation. The polypeptide is Protein nucleotidyltransferase YdiU (Rhizobium rhizogenes (strain K84 / ATCC BAA-868) (Agrobacterium radiobacter)).